The chain runs to 388 residues: Protein TsgA homolog (388 aa).

12 helical membrane passes run 11-31 (WISF…GMIM), 50-70 (TFLN…IEII), 77-97 (IFSF…NSIF), 101-121 (INMF…TFII), 133-153 (LLLL…IVTA), 160-180 (IIWY…FLLT), 206-226 (VFLL…FISW), 244-264 (SLVS…SFII), 268-288 (NLYR…YCFI), 298-318 (YIII…ITLA), 332-352 (LILL…SPIV), and 360-380 (TLIS…LIYF).

It belongs to the major facilitator superfamily. TsgA family.

It localises to the cell membrane. This Buchnera aphidicola subsp. Acyrthosiphon pisum (strain Tuc7) protein is Protein TsgA homolog.